A 140-amino-acid polypeptide reads, in one-letter code: Histone H3-like centromeric protein A (140 aa).

The tract at residues 1–46 (MGPRRRSRKPEAPRRRSPSPTPTPGPSRRGPSLGASSHQHSRRRQG) is disordered. Position 2 is a n,N,N-trimethylglycine (Gly2). Ser7 is subject to Phosphoserine; by AURKA and AURKB. Residues Ser17, Ser19, and Ser27 each carry the phosphoserine modification. A compositionally biased stretch (low complexity) spans 26-37 (PSRRGPSLGASS). An important for flexibility of DNA ends that protrude from nucleosomes region spans residues 39 to 54 (QHSRRRQGWLKEIRKL). Ser68 is subject to Phosphoserine. The interval 75 to 116 (CVKFTRGVDFNWQAQALLALQEAAEAFLVHLFEDAYLLTLHA) is CATD.

The protein belongs to the histone H3 family. Component of centromeric nucleosomes, where DNA is wrapped around a histone octamer core. The octamer contains two molecules each of H2A, H2B, CENPA and H4 assembled in one CENPA-H4 heterotetramer and two H2A-H2B heterodimers. CENPA modulates the DNA-binding characteristics of nucleosomes so that protruding DNA ends have higher flexibility than in nucleosomes containing conventional histone H3. Inhibits binding of histone H1 to nucleosomes, since histone H1 binds preferentially to rigid DNA linkers that protrude from nucleosomes. Nucleosomes containing CENPA also contain histone H2A variants such as MACROH2A and H2A.Z/H2AZ1. The CENPA-H4 heterotetramer is more compact and structurally more rigid than corresponding H3-H4 heterotetramers. Can assemble into nucleosomes that contain both CENPA and histone H3.3; these nucleosomes interact with a single CENPC chain. Heterotrimer composed of HJURP, CENPA and histone H4, where HJURP interacts with the dimer formed by CENPA and histone H4 and prevents tetramerization of CENPA and H4. Component of the CENPA-NAC complex, at least composed of CENPA, CENPC, CENPH, CENPM, CENPN, CENPT and CENPU. Interacts (via CATD domain) with HJURP; the interaction is direct and is required for its localization to centromeres. Interacts with CENPC, CENPN and CENPT; interaction is direct. Part of a centromere complex consisting of CENPA, CENPT and CENPW. Identified in centromere complexes containing histones H2A, H2B and H4, and at least CENPA, CENPB, CENPC, CENPT, CENPN, HJURP, SUPT16H, SSRP1 and RSF1. Can self-associate. The CENPA-H4 heterotetramer can bind DNA by itself (in vitro). Interacts with CDK1, PPP1CA and RBBP7. In terms of assembly, (Microbial infection) Interacts directly with herpes virus HHV-1 protein ICP0. Post-translationally, ubiquitinated. Interaction with herpes virus HSV-1 ICP0 protein, leads to its degradation by the proteasome pathway. In terms of processing, trimethylated by NTMT1 at the N-terminal glycine after cleavage of Met-1. Methylation is low before incorporation into nucleosomes and increases with cell cycle progression, with the highest levels in mitotic nucleosomes. Phosphorylated by CDK1 at Ser-68 during early mitosis; this abolishes association with chromatin and centromeres, prevents interaction with HJURP and thereby prevents premature assembly of CENPA into centromeres. Dephosphorylated at Ser-68 by PPP1CA during late mitosis. Phosphorylation of Ser-7 by AURKA and AURKB during prophase is required for localization of AURKA and AURKB at inner centromere and is essential for normal cytokinesis. Initial phosphorylation during prophase is mediated by AURKA and is maintained by AURKB. Post-translationally, poly-ADP-ribosylated by PARP1.

The protein resides in the nucleus. Its subcellular location is the chromosome. It localises to the centromere. Functionally, histone H3-like nucleosomal protein that is specifically found in centromeric nucleosomes. Replaces conventional H3 in the nucleosome core of centromeric chromatin that serves as an assembly site for the inner kinetochore. The presence of CENPA subtly modifies the nucleosome structure and the way DNA is wrapped around the nucleosome and gives rise to protruding DNA ends that are less well-ordered and rigid compared to nucleosomes containing histone H3. May serve as an epigenetic mark that propagates centromere identity through replication and cell division. Required for recruitment and assembly of kinetochore proteins, and as a consequence required for progress through mitosis, chromosome segregation and cytokinesis. The sequence is that of Histone H3-like centromeric protein A (CENPA) from Homo sapiens (Human).